Here is a 442-residue protein sequence, read N- to C-terminus: Lipoyl synthase, apicoplast (442 aa).

The first 25 residues, 1 to 25 (MHVLTPSLYIYAFFIVCVRLKCGRS), serve as a signal peptide directing secretion. The interval 92–154 (LLRSESATDE…EKKPDWFHVP (63 aa)) is disordered. The span at 109–127 (LKEKLKESPANWGKDKQEE) shows a compositional bias: basic and acidic residues. The [4Fe-4S] cluster site is built by C177, C182, C188, C203, C207, C210, and S418. The Radical SAM core domain maps to 189–407 (WNIGTATIML…KEEGMKMGFK (219 aa)).

It belongs to the radical SAM superfamily. Lipoyl synthase family. It depends on [4Fe-4S] cluster as a cofactor.

It localises to the plastid. It is found in the apicoplast. It carries out the reaction [[Fe-S] cluster scaffold protein carrying a second [4Fe-4S](2+) cluster] + N(6)-octanoyl-L-lysyl-[protein] + 2 oxidized [2Fe-2S]-[ferredoxin] + 2 S-adenosyl-L-methionine + 4 H(+) = [[Fe-S] cluster scaffold protein] + N(6)-[(R)-dihydrolipoyl]-L-lysyl-[protein] + 4 Fe(3+) + 2 hydrogen sulfide + 2 5'-deoxyadenosine + 2 L-methionine + 2 reduced [2Fe-2S]-[ferredoxin]. The protein operates within protein modification; protein lipoylation via endogenous pathway; protein N(6)-(lipoyl)lysine from octanoyl-[acyl-carrier-protein]: step 2/2. Its function is as follows. Catalyzes the radical-mediated insertion of two sulfur atoms into the C-6 and C-8 positions of the octanoyl moiety bound to the lipoyl domains of lipoate-dependent enzymes, thereby converting the octanoylated domains into lipoylated derivatives. The sequence is that of Lipoyl synthase, apicoplast from Plasmodium vivax (strain Salvador I).